Here is a 417-residue protein sequence, read N- to C-terminus: Serine hydroxymethyltransferase 1 (417 aa).

(6S)-5,6,7,8-tetrahydrofolate-binding positions include L121 and 125–127 (GHL). K229 carries the N6-(pyridoxal phosphate)lysine modification. A (6S)-5,6,7,8-tetrahydrofolate-binding site is contributed by 355-357 (SPF).

The protein belongs to the SHMT family. As to quaternary structure, homodimer. Pyridoxal 5'-phosphate serves as cofactor.

The protein resides in the cytoplasm. It carries out the reaction (6R)-5,10-methylene-5,6,7,8-tetrahydrofolate + glycine + H2O = (6S)-5,6,7,8-tetrahydrofolate + L-serine. The protein operates within one-carbon metabolism; tetrahydrofolate interconversion. It participates in amino-acid biosynthesis; glycine biosynthesis; glycine from L-serine: step 1/1. Its function is as follows. Catalyzes the reversible interconversion of serine and glycine with tetrahydrofolate (THF) serving as the one-carbon carrier. This reaction serves as the major source of one-carbon groups required for the biosynthesis of purines, thymidylate, methionine, and other important biomolecules. Also exhibits THF-independent aldolase activity toward beta-hydroxyamino acids, producing glycine and aldehydes, via a retro-aldol mechanism. This chain is Serine hydroxymethyltransferase 1, found in Pectobacterium atrosepticum (strain SCRI 1043 / ATCC BAA-672) (Erwinia carotovora subsp. atroseptica).